We begin with the raw amino-acid sequence, 596 residues long: Aspartate--tRNA(Asp/Asn) ligase (596 aa).

L-aspartate is bound at residue E172. The tract at residues 196-199 (QLFK) is aspartate. R218 provides a ligand contact to L-aspartate. Residues 218-220 (RDE) and Q227 contribute to the ATP site. H450 is an L-aspartate binding site. Position 484 (E484) interacts with ATP. R491 contacts L-aspartate. Position 536 to 539 (536 to 539 (GLDR)) interacts with ATP.

Belongs to the class-II aminoacyl-tRNA synthetase family. Type 1 subfamily. As to quaternary structure, homodimer.

It is found in the cytoplasm. The enzyme catalyses tRNA(Asx) + L-aspartate + ATP = L-aspartyl-tRNA(Asx) + AMP + diphosphate. Its function is as follows. Aspartyl-tRNA synthetase with relaxed tRNA specificity since it is able to aspartylate not only its cognate tRNA(Asp) but also tRNA(Asn). Reaction proceeds in two steps: L-aspartate is first activated by ATP to form Asp-AMP and then transferred to the acceptor end of tRNA(Asp/Asn). This Acidithiobacillus ferrooxidans (strain ATCC 23270 / DSM 14882 / CIP 104768 / NCIMB 8455) (Ferrobacillus ferrooxidans (strain ATCC 23270)) protein is Aspartate--tRNA(Asp/Asn) ligase.